Here is a 406-residue protein sequence, read N- to C-terminus: Serine/threonine transporter SstT (406 aa).

The next 9 helical transmembrane spans lie at 15–35 (LVLQ…VSPS), 47–67 (FVGA…AASI), 81–101 (IIAM…VLSF), 140–160 (ALMS…GLAL), 191–211 (FGIF…ALAG), 215–235 (LLVV…PAMV), 289–309 (IPLG…TLTL), 315–335 (MGIE…AVSA), and 362–382 (IAMQ…SAET).

The protein belongs to the dicarboxylate/amino acid:cation symporter (DAACS) (TC 2.A.23) family.

The protein localises to the cell inner membrane. The catalysed reaction is L-serine(in) + Na(+)(in) = L-serine(out) + Na(+)(out). It carries out the reaction L-threonine(in) + Na(+)(in) = L-threonine(out) + Na(+)(out). In terms of biological role, involved in the import of serine and threonine into the cell, with the concomitant import of sodium (symport system). The chain is Serine/threonine transporter SstT from Vibrio vulnificus (strain CMCP6).